Consider the following 339-residue polypeptide: Peroxidase 29 (339 aa).

An N-terminal signal peptide occupies residues 1-28 (MKPKSKVAESTAASCFLVMSLLCSCIIG). 4 disulfide bridges follow: Cys47-Cys127, Cys80-Cys85, Cys133-Cys335, and Cys213-Cys242. Residue His78 is the Proton acceptor of the active site. 5 residues coordinate Ca(2+): Asp79, Val82, Gly84, Asp86, and Ser88. Pro176 is a binding site for substrate. His206 contributes to the heme b binding site. Residue Thr207 coordinates Ca(2+). N-linked (GlcNAc...) asparagine glycosylation occurs at Asn224. The Ca(2+) site is built by Asp260, Thr262, and Asp267.

This sequence belongs to the peroxidase family. Classical plant (class III) peroxidase subfamily. The cofactor is heme b. It depends on Ca(2+) as a cofactor.

It is found in the secreted. The catalysed reaction is 2 a phenolic donor + H2O2 = 2 a phenolic radical donor + 2 H2O. Removal of H(2)O(2), oxidation of toxic reductants, biosynthesis and degradation of lignin, suberization, auxin catabolism, response to environmental stresses such as wounding, pathogen attack and oxidative stress. These functions might be dependent on each isozyme/isoform in each plant tissue. The sequence is that of Peroxidase 29 (PER29) from Arabidopsis thaliana (Mouse-ear cress).